The primary structure comprises 88 residues: CRISPR-associated endoribonuclease Cas2 3 (88 aa).

D9 is a binding site for Mg(2+).

This sequence belongs to the CRISPR-associated endoribonuclease Cas2 protein family. As to quaternary structure, homodimer, forms a heterotetramer with a Cas1 homodimer. It depends on Mg(2+) as a cofactor.

Its function is as follows. CRISPR (clustered regularly interspaced short palindromic repeat), is an adaptive immune system that provides protection against mobile genetic elements (viruses, transposable elements and conjugative plasmids). CRISPR clusters contain sequences complementary to antecedent mobile elements and target invading nucleic acids. CRISPR clusters are transcribed and processed into CRISPR RNA (crRNA). Functions as a ssRNA-specific endoribonuclease. Involved in the integration of spacer DNA into the CRISPR cassette. The polypeptide is CRISPR-associated endoribonuclease Cas2 3 (Thermodesulfovibrio yellowstonii (strain ATCC 51303 / DSM 11347 / YP87)).